Here is a 346-residue protein sequence, read N- to C-terminus: N-acetyl-gamma-glutamyl-phosphate reductase (346 aa).

The active site involves C150.

It belongs to the NAGSA dehydrogenase family. Type 1 subfamily.

Its subcellular location is the cytoplasm. It catalyses the reaction N-acetyl-L-glutamate 5-semialdehyde + phosphate + NADP(+) = N-acetyl-L-glutamyl 5-phosphate + NADPH + H(+). It functions in the pathway amino-acid biosynthesis; L-arginine biosynthesis; N(2)-acetyl-L-ornithine from L-glutamate: step 3/4. Functionally, catalyzes the NADPH-dependent reduction of N-acetyl-5-glutamyl phosphate to yield N-acetyl-L-glutamate 5-semialdehyde. This is N-acetyl-gamma-glutamyl-phosphate reductase from Moorella thermoacetica (strain ATCC 39073 / JCM 9320).